The primary structure comprises 271 residues: DNA-directed RNA polymerase subunit Rpo3 (271 aa).

It belongs to the archaeal Rpo3/eukaryotic RPB3 RNA polymerase subunit family. In terms of assembly, part of the RNA polymerase complex.

The protein localises to the cytoplasm. The catalysed reaction is RNA(n) + a ribonucleoside 5'-triphosphate = RNA(n+1) + diphosphate. DNA-dependent RNA polymerase (RNAP) catalyzes the transcription of DNA into RNA using the four ribonucleoside triphosphates as substrates. This Picrophilus torridus (strain ATCC 700027 / DSM 9790 / JCM 10055 / NBRC 100828 / KAW 2/3) protein is DNA-directed RNA polymerase subunit Rpo3.